A 503-amino-acid chain; its full sequence is ATP synthase subunit alpha (503 aa).

170 to 177 (GDRQTGKT) contributes to the ATP binding site.

This sequence belongs to the ATPase alpha/beta chains family. F-type ATPases have 2 components, CF(1) - the catalytic core - and CF(0) - the membrane proton channel. CF(1) has five subunits: alpha(3), beta(3), gamma(1), delta(1), epsilon(1). CF(0) has three main subunits: a(1), b(2) and c(9-12). The alpha and beta chains form an alternating ring which encloses part of the gamma chain. CF(1) is attached to CF(0) by a central stalk formed by the gamma and epsilon chains, while a peripheral stalk is formed by the delta and b chains.

It localises to the cell inner membrane. The catalysed reaction is ATP + H2O + 4 H(+)(in) = ADP + phosphate + 5 H(+)(out). Produces ATP from ADP in the presence of a proton gradient across the membrane. The alpha chain is a regulatory subunit. This is ATP synthase subunit alpha from Pseudothermotoga lettingae (strain ATCC BAA-301 / DSM 14385 / NBRC 107922 / TMO) (Thermotoga lettingae).